The chain runs to 45 residues: Rubredoxin-1 (45 aa).

Methionine 1 carries the post-translational modification N-formylmethionine. In terms of domain architecture, Rubredoxin-like spans 1-45 (MQKYVCNVCGYEYDPAEHDNVPFDQLPDDWCCPVCGVSKDQFSPA). Fe cation-binding residues include cysteine 6, cysteine 9, cysteine 32, and cysteine 35.

This sequence belongs to the rubredoxin family. The cofactor is Fe(3+).

The protein resides in the cytoplasm. Rubredoxin is a small nonheme, iron protein lacking acid-labile sulfide. Its single Fe, chelated to 4 Cys, functions as an electron acceptor and may also stabilize the conformation of the molecule. Functionally, electron acceptor for cytoplasmic lactate dehydrogenase. The protein is Rubredoxin-1 (rd1) of Desulfovibrio desulfuricans (strain ATCC 27774 / DSM 6949 / MB).